Reading from the N-terminus, the 148-residue chain is Large ribosomal subunit protein uL15 (148 aa).

The segment at 1 to 47 (MAFSLENLRPAPGSRPKSKRVGRGSSSGKGKTSSRGHKGQGRGTGKV) is disordered.

Belongs to the universal ribosomal protein uL15 family. As to quaternary structure, part of the 50S ribosomal subunit.

In terms of biological role, binds to the 23S rRNA. The chain is Large ribosomal subunit protein uL15 from Kosmotoga olearia (strain ATCC BAA-1733 / DSM 21960 / TBF 19.5.1).